We begin with the raw amino-acid sequence, 187 residues long: UPF0200 protein MM_1313 (187 aa).

9-16 contributes to the ATP binding site; that stretch reads GMPASGKS.

This sequence belongs to the UPF0200 family.

This is UPF0200 protein MM_1313 from Methanosarcina mazei (strain ATCC BAA-159 / DSM 3647 / Goe1 / Go1 / JCM 11833 / OCM 88) (Methanosarcina frisia).